Reading from the N-terminus, the 111-residue chain is Small ribosomal subunit protein bS18 (111 aa).

The tract at residues 1-32 (MDLENTENVENNNNNEEEVKAKGERKAHFNKE) is disordered. Over residues 17 to 32 (EEVKAKGERKAHFNKE) the composition is skewed to basic and acidic residues.

It belongs to the bacterial ribosomal protein bS18 family. As to quaternary structure, part of the 30S ribosomal subunit. Forms a tight heterodimer with protein bS6.

Its function is as follows. Binds as a heterodimer with protein bS6 to the central domain of the 16S rRNA, where it helps stabilize the platform of the 30S subunit. In Brachyspira hyodysenteriae (strain ATCC 49526 / WA1), this protein is Small ribosomal subunit protein bS18.